The primary structure comprises 381 residues: L-lactate dehydrogenase (381 aa).

Positions 1-380 (MIISSANDYR…TRDALVDLSK (380 aa)) constitute an FMN hydroxy acid dehydrogenase domain. Tyr24 provides a ligand contact to substrate. FMN is bound by residues Ser106 and Gln127. A substrate-binding site is contributed by Tyr129. FMN is bound at residue Thr155. Substrate is bound at residue Arg164. FMN is bound at residue Lys251. His275 serves as the catalytic Proton acceptor. Arg278 is a binding site for substrate. 306 to 330 (DSGIRNGLDIVRMLALGADATMLGR) is an FMN binding site.

This sequence belongs to the FMN-dependent alpha-hydroxy acid dehydrogenase family. FMN is required as a cofactor.

The protein localises to the cell inner membrane. It catalyses the reaction (S)-lactate + A = pyruvate + AH2. Catalyzes the conversion of L-lactate to pyruvate. Is coupled to the respiratory chain. The sequence is that of L-lactate dehydrogenase from Actinobacillus pleuropneumoniae serotype 5b (strain L20).